Consider the following 655-residue polypeptide: Probable replication restart protein PriA (655 aa).

The Zn(2+) site is built by C368, C371, C377, C380, C396, C399, C408, and C411.

It belongs to the helicase family. PriA subfamily. In terms of assembly, component of the replication restart primosome. Zn(2+) is required as a cofactor.

In terms of biological role, initiates the restart of stalled replication forks, which reloads the replicative helicase on sites other than the origin of replication. Recognizes and binds to abandoned replication forks and remodels them to uncover a helicase loading site. Promotes assembly of the primosome at these replication forks. The sequence is that of Probable replication restart protein PriA from Mycobacterium bovis (strain ATCC BAA-935 / AF2122/97).